The sequence spans 227 residues: Translation initiation factor 6 (227 aa).

Belongs to the eIF-6 family.

In terms of biological role, binds to the 50S ribosomal subunit and prevents its association with the 30S ribosomal subunit to form the 70S initiation complex. This chain is Translation initiation factor 6, found in Staphylothermus marinus (strain ATCC 43588 / DSM 3639 / JCM 9404 / F1).